The chain runs to 420 residues: MDQFEVLVAVERLFFAWEQISDKETLVERLEGRLADMNLSLSTSPHRSLFLPYLGTRKDHNVADPDTISSEYGLQLLVLENALAHNYSKAISLLESSTVGDVGYIEWCRCMMRLNILGKSYGNNSELDIGLRSYLRNGAQGSSLLLTDEVSDCRMLGFASLFLQEEYFIAVHHMVRSIHEHPSLVDYLLREEDGRDIFILKEEYKLMLTIAVLVAIPLENYQDFLLLEDLNPLLQGLPELHVCLNLLVSTSFGSFFARWLGPIQELANRSCFLAPVWHSVNSHMRSKILVFYIKISERVTVSYLARTLDIPYDTVMADVSSLIQKFDINIGIEGDLVYYKEDLPVGNLVSKVSQIQREIDSKLLVMKQKNDALRSFIENMLKEQSVEPLNRSQDMDAFELHEQSEDEEYEEEHLEEGENV.

The PCI domain maps to 177-346 (SIHEHPSLVD…VYYKEDLPVG (170 aa)). Residues 386–420 (VEPLNRSQDMDAFELHEQSEDEEYEEEHLEEGENV) are disordered. Residues 404–420 (SEDEEYEEEHLEEGENV) show a composition bias toward acidic residues.

In terms of assembly, component of a COP9 signalosome-like (CSN) complex.

It localises to the cytoplasm. The protein localises to the nucleus. Its function is as follows. Component of the COP9 signalosome (CSN) complex that acts as an regulator of the ubiquitin (Ubl) conjugation pathway by mediating the deneddylation of the cullin subunit of SCF-type E3 ubiquitin-protein ligase complexes The CSN complex is involved in the regulation of the mating pheromone response. PCI8 may also be involved in transcriptional and translational control. The chain is COP9 signalosome complex subunit 11 (PCI8) from Eremothecium gossypii (strain ATCC 10895 / CBS 109.51 / FGSC 9923 / NRRL Y-1056) (Yeast).